Consider the following 78-residue polypeptide: Large ribosomal subunit protein bL28 (78 aa).

Positions 1 to 20 (MSRVCQVTGKRPVTGNNRSH) are disordered.

The protein belongs to the bacterial ribosomal protein bL28 family.

The polypeptide is Large ribosomal subunit protein bL28 (Photobacterium profundum (strain SS9)).